An 807-amino-acid chain; its full sequence is Ribosome-releasing factor 2, mitochondrial (807 aa).

The N-terminal 18 residues, 1-18 (MFCRKYAFQTWKQFSRFY), are a transit peptide targeting the mitochondrion. Positions 27 to 315 (SKTRNIGIIA…GITKYLPSPL (289 aa)) constitute a tr-type G domain. GTP contacts are provided by residues 36–43 (AHIDAGKT), 100–104 (DTPGH), and 154–157 (NKMD).

Belongs to the TRAFAC class translation factor GTPase superfamily. Classic translation factor GTPase family. EF-G/EF-2 subfamily.

The protein resides in the mitochondrion. Functionally, mitochondrial GTPase that mediates the disassembly of ribosomes from messenger RNA at the termination of mitochondrial protein biosynthesis. Not involved in the GTP-dependent ribosomal translocation step during translation elongation. This chain is Ribosome-releasing factor 2, mitochondrial, found in Candida dubliniensis (strain CD36 / ATCC MYA-646 / CBS 7987 / NCPF 3949 / NRRL Y-17841) (Yeast).